Here is a 330-residue protein sequence, read N- to C-terminus: Beta-ketoacyl-[acyl-carrier-protein] synthase III (330 aa).

Active-site residues include Cys-114 and His-255. The interval Gln-256–Arg-260 is ACP-binding. Residue Asn-285 is part of the active site.

The protein belongs to the thiolase-like superfamily. FabH family. In terms of assembly, homodimer.

It localises to the cytoplasm. It catalyses the reaction malonyl-[ACP] + acetyl-CoA + H(+) = 3-oxobutanoyl-[ACP] + CO2 + CoA. It participates in lipid metabolism; fatty acid biosynthesis. Its function is as follows. Catalyzes the condensation reaction of fatty acid synthesis by the addition to an acyl acceptor of two carbons from malonyl-ACP. Catalyzes the first condensation reaction which initiates fatty acid synthesis and may therefore play a role in governing the total rate of fatty acid production. Possesses both acetoacetyl-ACP synthase and acetyl transacylase activities. Its substrate specificity determines the biosynthesis of branched-chain and/or straight-chain of fatty acids. This chain is Beta-ketoacyl-[acyl-carrier-protein] synthase III, found in Trichormus variabilis (strain ATCC 29413 / PCC 7937) (Anabaena variabilis).